The chain runs to 146 residues: Large ribosomal subunit protein uL24 (146 aa).

The disordered stretch occupies residues Met-1–Pro-33. Residues Ser-9–His-18 are compositionally biased toward basic residues.

The protein belongs to the universal ribosomal protein uL24 family.

The polypeptide is Large ribosomal subunit protein uL24 (RPL26) (Brassica campestris (Field mustard)).